Reading from the N-terminus, the 1064-residue chain is Fibropellin-1 (1064 aa).

A signal peptide spans 1–19 (MRTWLLAVLLLSVIAVTYG). In terms of domain architecture, EGF-like 1 spans 20–55 (QGECDSDPCENGSTCQEGEGSYICQCPMGYDGQNCD). 4 cysteine pairs are disulfide-bonded: cysteine 23–cysteine 34, cysteine 28–cysteine 43, cysteine 45–cysteine 54, and cysteine 62–cysteine 88. Residue asparagine 30 is glycosylated (N-linked (GlcNAc...) asparagine). The region spanning 62–175 (CGYNVFDANG…NRGFRITFSS (114 aa)) is the CUB domain. The N-linked (GlcNAc...) asparagine glycan is linked to asparagine 136. Positions 176–212 (DGDDCDPNLCQNGAACTDLVNDYACTCPPGFTGRNCE) constitute an EGF-like 2; calcium-binding domain. 61 disulfides stabilise this stretch: cysteine 180/cysteine 191, cysteine 185/cysteine 200, cysteine 202/cysteine 211, cysteine 218/cysteine 229, cysteine 223/cysteine 238, cysteine 240/cysteine 249, cysteine 256/cysteine 267, cysteine 261/cysteine 276, cysteine 278/cysteine 287, cysteine 294/cysteine 305, cysteine 299/cysteine 314, cysteine 316/cysteine 325, cysteine 332/cysteine 343, cysteine 337/cysteine 352, cysteine 354/cysteine 363, cysteine 370/cysteine 381, cysteine 375/cysteine 390, cysteine 392/cysteine 401, cysteine 408/cysteine 419, cysteine 413/cysteine 428, cysteine 430/cysteine 439, cysteine 446/cysteine 457, cysteine 451/cysteine 466, cysteine 468/cysteine 477, cysteine 484/cysteine 495, cysteine 489/cysteine 504, cysteine 506/cysteine 515, cysteine 522/cysteine 533, cysteine 527/cysteine 542, cysteine 544/cysteine 553, cysteine 560/cysteine 571, cysteine 565/cysteine 580, cysteine 582/cysteine 591, cysteine 598/cysteine 609, cysteine 603/cysteine 618, cysteine 620/cysteine 629, cysteine 636/cysteine 647, cysteine 641/cysteine 656, cysteine 658/cysteine 667, cysteine 674/cysteine 685, cysteine 679/cysteine 694, cysteine 696/cysteine 705, cysteine 712/cysteine 723, cysteine 717/cysteine 732, cysteine 734/cysteine 743, cysteine 750/cysteine 761, cysteine 755/cysteine 770, cysteine 772/cysteine 781, cysteine 788/cysteine 799, cysteine 793/cysteine 808, cysteine 810/cysteine 819, cysteine 826/cysteine 837, cysteine 831/cysteine 846, cysteine 848/cysteine 857, cysteine 864/cysteine 875, cysteine 869/cysteine 884, cysteine 886/cysteine 895, cysteine 902/cysteine 913, cysteine 907/cysteine 922, cysteine 924/cysteine 933, and cysteine 939/cysteine 1015. The 37-residue stretch at 214–250 (DIDECASDPCQNGGACVDGVNGYVCNCVPGFDGDECE) folds into the EGF-like 3; calcium-binding domain. The EGF-like 4; calcium-binding domain occupies 252–288 (NINECASSPCLNGGICVDGVNMFECTCLAGFTGVRCE). The EGF-like 5; calcium-binding domain maps to 290–326 (NIDECASAPCQNGGICIDGINGYTCSCPLGFSGDNCE). In terms of domain architecture, EGF-like 6; calcium-binding spans 328–364 (NDDECSSIPCLNGGTCVDLVNAYMCVCAPGWTGPTCA). The EGF-like 7; calcium-binding domain maps to 366–402 (NIDECASAPCQNGGVCIDGVNGYMCDCQPGYTGTHCE). An EGF-like 8; calcium-binding domain is found at 404 to 440 (DIDECARPPCQNGGDCVDGVNGYVCICAPGFDGLNCE). An EGF-like 9; calcium-binding domain is found at 442–478 (NIDECASRPCQNGAVCVDGVNGFVCTCSAGYTGVLCE). The region spanning 480 to 516 (DINECASMPCLNGGVCTDLVNGYICTCAAGFEGTNCE) is the EGF-like 10; calcium-binding domain. Positions 518-554 (DTDECASFPCQNGATCTDQVNGYVCTCVPGYTGVLCE) constitute an EGF-like 11; calcium-binding domain. Residues 556 to 592 (DINECASFPCLNGGTCNDQVNGYVCVCAQDTSVSTCE) enclose the EGF-like 12; calcium-binding domain. The region spanning 594–630 (DRDECASAPCLNGGACMDVVNGFVCTCLPGWEGTNCE) is the EGF-like 13; calcium-binding domain. The EGF-like 14; calcium-binding domain occupies 632–668 (NTDECASSPCMNGGLCVDQVNSYVCFCLPGFTGIHCG). Positions 670-706 (EIDECASSPCLNGGQCIDRVDSYECVCAAGYTAVRCQ) constitute an EGF-like 15; calcium-binding domain. The EGF-like 16; calcium-binding domain occupies 708–744 (NIDECASAPCQNGGVCVDGVNGYVCNCAPGYTGDNCE). One can recognise an EGF-like 17; calcium-binding domain in the interval 746–782 (EIDECASMPCLNGGACIEMVNGYTCQCVAGYTGVICE). Positions 784–820 (DIDECASAPCQNGGVCTDTINGYICACVPGFTGSNCE) constitute an EGF-like 18; calcium-binding domain. Positions 822–858 (NIDECASDPCLNGGICVDGVNGFVCQCPPNYSGTYCE) constitute an EGF-like 19; calcium-binding domain. N-linked (GlcNAc...) asparagine glycosylation is present at asparagine 851. One can recognise an EGF-like 20 domain in the interval 860–896 (SLDACRSMPCQNGATCVNVGADYVCECVPGYAGQNCE). Residues 898–934 (DINECASLPCQNGGLCIDGIAGYTCQCRLGYIGVNCE) enclose the EGF-like 21; calcium-binding domain. Positions 937–1056 (GFCDLEGMWY…GQDKWTRYEQ (120 aa)) constitute an Avidin-like domain.

In terms of assembly, homotetramer.

Its subcellular location is the secreted. The protein resides in the extracellular space. The protein localises to the cytoplasmic vesicle. It is found in the extracellular matrix. It localises to the hyaline layer. Its subcellular location is the apical lamina. Functionally, forms the apical lamina, a component of the extracellular matrix. In Strongylocentrotus purpuratus (Purple sea urchin), this protein is Fibropellin-1 (EGF1).